Here is a 295-residue protein sequence, read N- to C-terminus: NAD kinase (295 aa).

The Proton acceptor role is filled by D74. NAD(+) is bound by residues 74-75 (DG), 148-149 (ND), H159, R176, D178, and 189-194 (TAYALS).

The protein belongs to the NAD kinase family. A divalent metal cation is required as a cofactor.

Its subcellular location is the cytoplasm. The catalysed reaction is NAD(+) + ATP = ADP + NADP(+) + H(+). Involved in the regulation of the intracellular balance of NAD and NADP, and is a key enzyme in the biosynthesis of NADP. Catalyzes specifically the phosphorylation on 2'-hydroxyl of the adenosine moiety of NAD to yield NADP. In Legionella pneumophila (strain Corby), this protein is NAD kinase.